The chain runs to 710 residues: Ferrioxamine receptor (710 aa).

A signal peptide spans 1–26; it reads MFSAFIIKRSAILCSLAMFIPLASIA. Residues 28–35 carry the TonB box motif; sequence DTIEVTAK. The next 30 beta stranded transmembrane spans lie at 29–37, 65–73, 91–99, 106–114, 137–145, 152–160, 180–188, 194–202, 208–216, 259–267, 271–279, 293–301, 309–317, 353–361, 370–378, 427–435, 443–451, 476–484, 491–499, 517–525, 531–539, 555–563, 567–575, 579–587, 610–618, 624–632, 649–657, 671–679, 684–692, and 702–710; these read TIEVTAKAG, TAQSVSVVT, YTPGVFTGF, YDTVALRGF, NVLQVDPWF, IKGPSSALY, SEGHFRLTA, QVAAFDYTD, WAFRLTGIT, GGYHSAVPA, IYGQKLSRG, WQQIYSYEF, WSFRQNASY, FAVDNQLEA, HKVLLGVDF, YEQSGVYLQ, WHLNLSGRY, GRASLLYSF, YVSYSQAIT, EQYEVGIIY, TSLYSAALY, YYVPAGKVN, LELEARSQI, LSVIAGYTY, NMASLWAQY, INVGAGIRY, YTLGDASVR, FVQLNVNNI, YVAACYSTS, and VQATVGYDF. Positions 61 to 174 constitute a TBDR plug domain; sequence PLILTAQSVS…PGGVVMMTSK (114 aa). Residues 181–710 form the TBDR beta-barrel domain; that stretch reads EGHFRLTAGN…SVQATVGYDF (530 aa). The TonB C-terminal box motif lies at 693-710; sequence YCYWGAERSVQATVGYDF.

It belongs to the TonB-dependent receptor family.

It localises to the cell outer membrane. In terms of biological role, ferrioxamine binding and uptake, in association with the TonB protein. This Yersinia enterocolitica protein is Ferrioxamine receptor (foxA).